Reading from the N-terminus, the 297-residue chain is Glucuronoxylan 4-O-methyltransferase 3 (297 aa).

The chain crosses the membrane as a helical span at residues 9-29; that stretch reads LNLKVIFIGSSILILIIIYLA. The segment covering 35–47 has biased composition (low complexity); sequence SSSSKPISKTNLS. The segment at 35–63 is disordered; the sequence is SSSSKPISKTNLSQEEEETQHKQEGCPTT.

This sequence belongs to the methyltransferase superfamily. As to expression, expressed in hypocotyls, roots, rosette leaves, stems and siliques.

Its subcellular location is the golgi apparatus membrane. The catalysed reaction is glucuronoxylan D-glucuronate + n S-adenosyl-L-methionine = glucuronoxylan 4-O-methyl-D-glucuronate + n S-adenosyl-L-homocysteine + n H(+). Its function is as follows. Methyltransferase catalyzing 4-O-methylation of glucuronic acid side chains on xylan. The sequence is that of Glucuronoxylan 4-O-methyltransferase 3 (GXM3) from Arabidopsis thaliana (Mouse-ear cress).